The sequence spans 865 residues: cGMP-specific 3',5'-cyclic phosphodiesterase (865 aa).

Residues 69–83 (CSCSSQQSSRADSSA) are compositionally biased toward low complexity. The segment at 69-92 (CSCSSQQSSRADSSAPGTPTRKIS) is disordered. Position 92 is a phosphoserine (Ser-92). GAF domains lie at 154–304 (DVTA…GIVL) and 336–493 (SLEV…GLGI). A PDEase domain is found at 526-850 (ETKELQSLAA…QKWQALAEQQ (325 aa)). Residue His-603 is the Proton donor of the active site. Residues His-607, His-643, Asp-644, and Asp-754 each coordinate Zn(2+). Residue Asp-644 participates in Mg(2+) binding. Residue Gln-807 coordinates 3',5'-cyclic GMP.

It belongs to the cyclic nucleotide phosphodiesterase family. The cofactor is Zn(2+). It depends on Mg(2+) as a cofactor. In terms of processing, phosphorylation is regulated by binding of cGMP to the two allosteric sites. Phosphorylation by PRKG1 leads to its activation. As to expression, isoform PDE5A1 and isoform PDE5A2 are highly expressed in the cerebellum, hippocampus, retina, lung, heart, spleen, and thoracic artery. Isoform PDE5A1, but not isoform PDE5A2, is also abundantly expressed in the pylorus.

It is found in the cytoplasm. It localises to the cytosol. The catalysed reaction is 3',5'-cyclic GMP + H2O = GMP + H(+). It functions in the pathway purine metabolism; 3',5'-cyclic GMP degradation; GMP from 3',5'-cyclic GMP: step 1/1. With respect to regulation, inhibited by zaprinast. In terms of biological role, plays a role in signal transduction by regulating the intracellular concentration of cyclic nucleotides. This phosphodiesterase catalyzes the specific hydrolysis of cGMP to 5'-GMP. Specifically regulates nitric-oxide-generated cGMP. This Canis lupus familiaris (Dog) protein is cGMP-specific 3',5'-cyclic phosphodiesterase (PDE5A).